Reading from the N-terminus, the 668-residue chain is DNA ligase (668 aa).

NAD(+)-binding positions include D35–D39 and S83–L84. The active-site N6-AMP-lysine intermediate is the K125. Residues R147, E181, and K317 each contribute to the NAD(+) site. Zn(2+) is bound by residues C410, C413, C426, and C432. A BRCT domain is found at K591 to N668.

The protein belongs to the NAD-dependent DNA ligase family. LigA subfamily. The cofactor is Mg(2+). Mn(2+) serves as cofactor.

It carries out the reaction NAD(+) + (deoxyribonucleotide)n-3'-hydroxyl + 5'-phospho-(deoxyribonucleotide)m = (deoxyribonucleotide)n+m + AMP + beta-nicotinamide D-nucleotide.. DNA ligase that catalyzes the formation of phosphodiester linkages between 5'-phosphoryl and 3'-hydroxyl groups in double-stranded DNA using NAD as a coenzyme and as the energy source for the reaction. It is essential for DNA replication and repair of damaged DNA. The chain is DNA ligase from Clostridium tetani (strain Massachusetts / E88).